A 233-amino-acid polypeptide reads, in one-letter code: Lipoprotein-releasing system ATP-binding protein LolD (233 aa).

The 228-residue stretch at leucine 6–glutamate 233 folds into the ABC transporter domain. Glycine 42–serine 49 is an ATP binding site.

The protein belongs to the ABC transporter superfamily. Lipoprotein translocase (TC 3.A.1.125) family. The complex is composed of two ATP-binding proteins (LolD) and two transmembrane proteins (LolC and LolE).

Its subcellular location is the cell inner membrane. Part of the ABC transporter complex LolCDE involved in the translocation of mature outer membrane-directed lipoproteins, from the inner membrane to the periplasmic chaperone, LolA. Responsible for the formation of the LolA-lipoprotein complex in an ATP-dependent manner. The protein is Lipoprotein-releasing system ATP-binding protein LolD of Salmonella paratyphi A (strain ATCC 9150 / SARB42).